A 784-amino-acid polypeptide reads, in one-letter code: Cadherin-15 (784 aa).

Positions 1–21 (MGSALLLALGLLAQSLGLSWA) are cleaved as a signal peptide. The propeptide occupies 22-59 (VPEPKPSTLYPWRRASAPGRVRRAWVIPPISVSENHKR). Cadherin domains are found at residues 60 to 151 (LPYP…RPAF), 152 to 259 (LQDV…APEF), 260 to 374 (TKDE…APVF), 375 to 480 (PENP…DHAP), and 481 to 589 (ALAL…TCLP). Residues 60 to 605 (LPYPLVQIKS…GGGVGVSLGA (546 aa)) lie on the Extracellular side of the membrane. 2 N-linked (GlcNAc...) asparagine glycosylation sites follow: Asn106 and Asn226. N-linked (GlcNAc...) asparagine glycans are attached at residues Asn530, Asn537, and Asn575. Residues 606 to 625 (LVIVLASTVVLLVLILLAAL) traverse the membrane as a helical segment. At 626–784 (RTRFRGHSRG…ARLADMYGHQ (159 aa)) the chain is on the cytoplasmic side. The interval 676–700 (EPRATSRSLGRPPLRRDAPFSYVPQ) is disordered.

As to expression, skeletal muscle.

Its subcellular location is the cell membrane. Functionally, cadherins are calcium-dependent cell adhesion proteins. They preferentially interact with themselves in a homophilic manner in connecting cells; cadherins may thus contribute to the sorting of heterogeneous cell types. M-cadherin is part of the myogenic program and may provide a trigger for terminal muscle differentiation. The chain is Cadherin-15 (Cdh15) from Mus musculus (Mouse).